Consider the following 330-residue polypeptide: MALPEFSMRQLLEAGVHFGHQSHRWNPKMAEYIFGARNNIHIIDLAQTVPLLHNALKAVSDTVAKGGRVLFVGTKRQAQDVVADAAKRSAQYFVNSRWLGGTLTNWKTISASIKRLRHLDEMLNSGDAGSYTKKERLTLQRERDKLDRSLGGIKDMGGLPDLLFVIDTNKEDIAIQEAQRLGIPVAAIVDTNCDPKGISYLVPGNDDAGRAITLYCDLVARAVIDGLSRAQGDSGYDAGAMAQPLREELPVVAEARFQGLAGPRGVADDLKKLTGVSGAIEKKFNDLGIFHFWQLAELDHDTAHKISEEVGLPSRADAWVAQAKTLTEAE.

The protein belongs to the universal ribosomal protein uS2 family.

This is Small ribosomal subunit protein uS2 from Rhodopseudomonas palustris (strain BisA53).